A 509-amino-acid polypeptide reads, in one-letter code: Aspartyl/glutamyl-tRNA(Asn/Gln) amidotransferase subunit B (509 aa).

Belongs to the GatB/GatE family. GatB subfamily. In terms of assembly, heterotrimer of A, B and C subunits.

The catalysed reaction is L-glutamyl-tRNA(Gln) + L-glutamine + ATP + H2O = L-glutaminyl-tRNA(Gln) + L-glutamate + ADP + phosphate + H(+). It catalyses the reaction L-aspartyl-tRNA(Asn) + L-glutamine + ATP + H2O = L-asparaginyl-tRNA(Asn) + L-glutamate + ADP + phosphate + 2 H(+). Functionally, allows the formation of correctly charged Asn-tRNA(Asn) or Gln-tRNA(Gln) through the transamidation of misacylated Asp-tRNA(Asn) or Glu-tRNA(Gln) in organisms which lack either or both of asparaginyl-tRNA or glutaminyl-tRNA synthetases. The reaction takes place in the presence of glutamine and ATP through an activated phospho-Asp-tRNA(Asn) or phospho-Glu-tRNA(Gln). The protein is Aspartyl/glutamyl-tRNA(Asn/Gln) amidotransferase subunit B of Mycobacterium leprae (strain Br4923).